The primary structure comprises 118 residues: Large ribosomal subunit protein bL19 (118 aa).

It belongs to the bacterial ribosomal protein bL19 family.

Functionally, this protein is located at the 30S-50S ribosomal subunit interface and may play a role in the structure and function of the aminoacyl-tRNA binding site. In Geotalea daltonii (strain DSM 22248 / JCM 15807 / FRC-32) (Geobacter daltonii), this protein is Large ribosomal subunit protein bL19.